The sequence spans 164 residues: MMAGLSNAVSSLFLKEFVGAFLLSMRYFFRPKATLNYPFEKGPVSPRFRGEHALRRYPNGEERCIACKLCEAICPAQAITIEAGPRRNDGTRRTVRYDIDMVKCIYCGFCQEACPVDAIVEGPNFEFSTETREELYYDKEKLLANGDRWEREIARNIAMDSPYR.

4Fe-4S ferredoxin-type domains lie at 54–84 (LRRYPNGEERCIACKLCEAICPAQAITIEAG) and 95–124 (VRYDIDMVKCIYCGFCQEACPVDAIVEGPN). Positions 64, 67, 70, 74, 104, 107, 110, and 114 each coordinate [4Fe-4S] cluster.

This sequence belongs to the complex I 23 kDa subunit family. NDH-1 is composed of 14 different subunits. Subunits NuoA, H, J, K, L, M, N constitute the membrane sector of the complex. It depends on [4Fe-4S] cluster as a cofactor.

The protein resides in the cell inner membrane. The enzyme catalyses a quinone + NADH + 5 H(+)(in) = a quinol + NAD(+) + 4 H(+)(out). Its function is as follows. NDH-1 shuttles electrons from NADH, via FMN and iron-sulfur (Fe-S) centers, to quinones in the respiratory chain. The immediate electron acceptor for the enzyme in this species is believed to be ubiquinone. Couples the redox reaction to proton translocation (for every two electrons transferred, four hydrogen ions are translocated across the cytoplasmic membrane), and thus conserves the redox energy in a proton gradient. The polypeptide is NADH-quinone oxidoreductase subunit I 1 (Rhizobium meliloti (strain 1021) (Ensifer meliloti)).